An 82-amino-acid chain; its full sequence is UPF0213 protein SH2523 (82 aa).

Residues 2 to 77 enclose the GIY-YIG domain; that stretch reads AKHYVYIVKC…KTFSRQQKLK (76 aa).

The protein belongs to the UPF0213 family.

The polypeptide is UPF0213 protein SH2523 (Staphylococcus haemolyticus (strain JCSC1435)).